Reading from the N-terminus, the 295-residue chain is Ribosomal protein L11 methyltransferase (295 aa).

S-adenosyl-L-methionine contacts are provided by T145, G166, D188, and N230.

It belongs to the methyltransferase superfamily. PrmA family.

The protein localises to the cytoplasm. The enzyme catalyses L-lysyl-[protein] + 3 S-adenosyl-L-methionine = N(6),N(6),N(6)-trimethyl-L-lysyl-[protein] + 3 S-adenosyl-L-homocysteine + 3 H(+). Its function is as follows. Methylates ribosomal protein L11. The polypeptide is Ribosomal protein L11 methyltransferase (Pectobacterium carotovorum subsp. carotovorum (strain PC1)).